Here is a 292-residue protein sequence, read N- to C-terminus: UDP-3-O-acyl-N-acetylglucosamine deacetylase (292 aa).

Zn(2+) is bound by residues His76, His232, and Asp236. His259 (proton donor) is an active-site residue.

The protein belongs to the LpxC family. The cofactor is Zn(2+).

It carries out the reaction a UDP-3-O-[(3R)-3-hydroxyacyl]-N-acetyl-alpha-D-glucosamine + H2O = a UDP-3-O-[(3R)-3-hydroxyacyl]-alpha-D-glucosamine + acetate. The protein operates within glycolipid biosynthesis; lipid IV(A) biosynthesis; lipid IV(A) from (3R)-3-hydroxytetradecanoyl-[acyl-carrier-protein] and UDP-N-acetyl-alpha-D-glucosamine: step 2/6. Its function is as follows. Catalyzes the hydrolysis of UDP-3-O-myristoyl-N-acetylglucosamine to form UDP-3-O-myristoylglucosamine and acetate, the committed step in lipid A biosynthesis. The protein is UDP-3-O-acyl-N-acetylglucosamine deacetylase of Thermodesulfovibrio yellowstonii (strain ATCC 51303 / DSM 11347 / YP87).